We begin with the raw amino-acid sequence, 535 residues long: CTP synthase (535 aa).

An amidoligase domain region spans residues 1–267 (MTKYIFVTGG…DQIVLDHFGV (267 aa)). Ser-13 contacts CTP. Ser-13 provides a ligand contact to UTP. Residue 14-19 (SLGKGI) coordinates ATP. An L-glutamine-binding site is contributed by Tyr-54. Asp-71 provides a ligand contact to ATP. Positions 71 and 141 each coordinate Mg(2+). CTP is bound by residues 148 to 150 (DIE), 188 to 193 (KTKPTQ), and Lys-224. UTP contacts are provided by residues 188–193 (KTKPTQ) and Lys-224. Residues 292–535 (KIALVGKYVA…VAAASREVKD (244 aa)) form the Glutamine amidotransferase type-1 domain. Residue Gly-354 participates in L-glutamine binding. The active-site Nucleophile; for glutamine hydrolysis is the Cys-381. Residues 382-385 (LGMQ), Glu-405, and Arg-463 contribute to the L-glutamine site. Catalysis depends on residues His-508 and Glu-510.

The protein belongs to the CTP synthase family. As to quaternary structure, homotetramer.

The enzyme catalyses UTP + L-glutamine + ATP + H2O = CTP + L-glutamate + ADP + phosphate + 2 H(+). The catalysed reaction is L-glutamine + H2O = L-glutamate + NH4(+). It carries out the reaction UTP + NH4(+) + ATP = CTP + ADP + phosphate + 2 H(+). Its pathway is pyrimidine metabolism; CTP biosynthesis via de novo pathway; CTP from UDP: step 2/2. Allosterically activated by GTP, when glutamine is the substrate; GTP has no effect on the reaction when ammonia is the substrate. The allosteric effector GTP functions by stabilizing the protein conformation that binds the tetrahedral intermediate(s) formed during glutamine hydrolysis. Inhibited by the product CTP, via allosteric rather than competitive inhibition. Catalyzes the ATP-dependent amination of UTP to CTP with either L-glutamine or ammonia as the source of nitrogen. Regulates intracellular CTP levels through interactions with the four ribonucleotide triphosphates. The chain is CTP synthase from Levilactobacillus brevis (strain ATCC 367 / BCRC 12310 / CIP 105137 / JCM 1170 / LMG 11437 / NCIMB 947 / NCTC 947) (Lactobacillus brevis).